The chain runs to 346 residues: Phosphate acyltransferase (346 aa).

Belongs to the PlsX family. Homodimer. Probably interacts with PlsY.

It is found in the cytoplasm. It catalyses the reaction a fatty acyl-[ACP] + phosphate = an acyl phosphate + holo-[ACP]. Its pathway is lipid metabolism; phospholipid metabolism. Catalyzes the reversible formation of acyl-phosphate (acyl-PO(4)) from acyl-[acyl-carrier-protein] (acyl-ACP). This enzyme utilizes acyl-ACP as fatty acyl donor, but not acyl-CoA. The chain is Phosphate acyltransferase from Delftia acidovorans (strain DSM 14801 / SPH-1).